A 251-amino-acid chain; its full sequence is Probable transcriptional regulatory protein SYNPCC7002_A0851 (251 aa).

The Response regulatory domain maps to 20–141 (RILVVEDEAV…ELVARCRALL (122 aa)). Asp76 is modified (4-aspartylphosphate). A DNA-binding region (ompR/PhoB-type) is located at residues 153–251 (NSVRQFKDIS…TVRGFGYRFG (99 aa)).

In terms of processing, phosphorylation.

This is Probable transcriptional regulatory protein SYNPCC7002_A0851 from Picosynechococcus sp. (strain ATCC 27264 / PCC 7002 / PR-6) (Agmenellum quadruplicatum).